Reading from the N-terminus, the 754-residue chain is Aspartyl/asparaginyl beta-hydroxylase (754 aa).

The disordered stretch occupies residues 1-48 (MAPRKNAKGGGGNSSSSSSGSPTGCTSGGSSSPGARRETKQGGLKNGR). The Cytoplasmic segment spans residues 1–56 (MAPRKNAKGGGGNSSSSSSGSPTGCTSGGSSSPGARRETKQGGLKNGRKGGLSGSS). Low complexity predominate over residues 14-34 (SSSSSSGSPTGCTSGGSSSPG). Serine 15 bears the Phosphoserine mark. Residues 57-77 (FFTWFMVIALLGVWTSVAVVW) form a helical; Signal-anchor for type II membrane protein membrane-spanning segment. Residues 78–754 (FDLVDYEEVL…PHQRRSLPAI (677 aa)) lie on the Lumenal side of the membrane. Asparagine 96 carries an N-linked (GlcNAc...) asparagine glycan. Ca(2+) is bound by residues aspartate 109, aspartate 111, aspartate 113, aspartate 115, and aspartate 120. Disordered regions lie at residues 176–197 (VYSEPGENLPQEPEGPAEELQP) and 247–326 (EQEN…KKKK). Basic and acidic residues-rich tracts occupy residues 261–284 (DAERTYQETDDVTYRDYDEQDHAV) and 309–318 (TNKKADEPGK). 5 TPR repeats span residues 337–370 (IKAELDAAEKLRKRGKIEEAVNAFEELVRKYPQS), 378–411 (AQCEDDLAEKRRSNEILRRAIETYQEAASLPDAP), 450–483 (TALKNDLGVGYLLIGDNDSAKKVYEEVLSVTPND), 485–517 (FAKVHYGFILKAQNKIAESIPYLKEGIESGDPG), and 521–553 (GRFYFHLGDAMQRVGNKEAYRWYELGHQRGHFA). Asparagine 466 carries N-linked (GlcNAc...) asparagine glycosylation. Tryptophan 621 lines the 2-oxoglutarate pocket. Cysteine 637 and cysteine 644 are disulfide-bonded. A 2-oxoglutarate-binding site is contributed by serine 664. Histidine 675 is a binding site for Fe cation. 684–686 (RMH) provides a ligand contact to 2-oxoglutarate. An N-linked (GlcNAc...) asparagine glycan is attached at asparagine 702. Histidine 721 is a Fe cation binding site. Arginine 731 serves as a coordination point for 2-oxoglutarate.

It belongs to the aspartyl/asparaginyl beta-hydroxylase family. In terms of assembly, monomer. Fe cation serves as cofactor. In terms of processing, might be processed to the 56 kDa (AA 289-754) or 52 kDa (AA 311-754) forms in the lumen of the endoplasmic reticulum.

It is found in the endoplasmic reticulum membrane. It carries out the reaction L-aspartyl-[protein] + 2-oxoglutarate + O2 = 3-hydroxy-L-aspartyl-[protein] + succinate + CO2. Functionally, specifically hydroxylates an Asp or Asn residue in certain epidermal growth factor-like (EGF) domains of a number of proteins. The sequence is that of Aspartyl/asparaginyl beta-hydroxylase (ASPH) from Bos taurus (Bovine).